A 245-amino-acid polypeptide reads, in one-letter code: MYPVDLHMHTVASTHAYSTLHDYIAEAKRKGIKLFAITDHGPDMADAPHHWHFINMRIWPRLVDGVGILRGIEANIKNIDGEIDCTGPMLNSLDVIIAGFHEPVFAPHDKETNTQAMIAAMASGNVHIISHPGNPKYPVDITAIAQAAAKYQVALEINNSSFLHSRKGSEDNCRAVAAAVRDAGGWVALGSDSHTAFTLGEFAECRKILDEVDFPEERVLNVSPGRLLRFLESRGMAPIPEFAEL.

Residues His7, His9, His15, His40, Glu73, His101, His131, Asp192, and His194 each contribute to the Zn(2+) site.

It belongs to the PHP family. As to quaternary structure, homotrimer. Zn(2+) is required as a cofactor.

The chain is Probable phosphatase CKO_02035 from Citrobacter koseri (strain ATCC BAA-895 / CDC 4225-83 / SGSC4696).